We begin with the raw amino-acid sequence, 339 residues long: MIKVAINGYGTIGKRVADAVSAQKDMEIIGVSKTKPSAEALIAVQRGYPIYIADMSKKDAFAKAGIPVAGSVEDMLKKADIVVDGTPGGVGESNKALYEKAGVKAIWQGGEDHEVAGFSFNAHANYKDAIGRQFVRVVSCNTTGLCRVIKAVDDAFGVVKVRAVMVRRGADPHVVKKGPIDAVVLDPPTIPSHHGPDVNTVLPHIDIVTMAMIVPTTQMHMHAITIELKKEVSRDDVLAVMRSHNRIGLVQPKTAIKSTAELKEYVMDMGRPRSDLWENGIFEASVNMVGKELFFFQAIHQEADVVIENVDAIRAMMGEVRDPETSIRMTNEAMQFTAL.

Residues 11-12 and glycine 110 each bind NAD(+); that span reads TI. 139–141 contacts D-glyceraldehyde 3-phosphate; sequence SCN. Cysteine 140 (nucleophile) is an active-site residue. NAD(+) is bound at residue arginine 168. Position 194–195 (194–195) interacts with D-glyceraldehyde 3-phosphate; that stretch reads HG. Residue glutamine 301 coordinates NAD(+).

It belongs to the glyceraldehyde-3-phosphate dehydrogenase family. Homotetramer.

Its subcellular location is the cytoplasm. It catalyses the reaction D-glyceraldehyde 3-phosphate + phosphate + NADP(+) = (2R)-3-phospho-glyceroyl phosphate + NADPH + H(+). The enzyme catalyses D-glyceraldehyde 3-phosphate + phosphate + NAD(+) = (2R)-3-phospho-glyceroyl phosphate + NADH + H(+). Its pathway is carbohydrate degradation; glycolysis; pyruvate from D-glyceraldehyde 3-phosphate: step 1/5. This chain is Glyceraldehyde-3-phosphate dehydrogenase, found in Methanospirillum hungatei JF-1 (strain ATCC 27890 / DSM 864 / NBRC 100397 / JF-1).